The following is a 227-amino-acid chain: PKHD-type hydroxylase PHZ_c0292 (227 aa).

The Fe2OG dioxygenase domain occupies 78 to 178 (VVFPPLFNRY…RVCSFFWIQS (101 aa)). Fe cation is bound by residues His96, Asp98, and His159. Residue Arg169 participates in 2-oxoglutarate binding.

Fe(2+) serves as cofactor. It depends on L-ascorbate as a cofactor.

In Phenylobacterium zucineum (strain HLK1), this protein is PKHD-type hydroxylase PHZ_c0292.